A 185-amino-acid chain; its full sequence is Nodulin-20 (185 aa).

Residues M1–A17 form the signal peptide.

The protein belongs to the nodulin 20 family.

The protein localises to the symbiosome. The protein resides in the peribacteroid membrane. It localises to the peribacteroid space. This Glycine max (Soybean) protein is Nodulin-20.